The following is a 173-amino-acid chain: RxLR effector protein PITG_10232 (173 aa).

The N-terminal stretch at 1–24 (MRLGYLIVGCAVALLATTDGVVDA) is a signal peptide. A disordered region spans residues 25 to 64 (SSKHKQLSTDVPRPADDISSERFLRSQDTPEDDGNPAHED). The span at 37-49 (RPADDISSERFLR) shows a compositional bias: basic and acidic residues. The RxLR-dEER signature appears at 46–65 (RFLRSQDTPEDDGNPAHEDR).

The protein belongs to the RxLR effector family.

It localises to the secreted. The protein resides in the host nucleus. Its subcellular location is the host cytoplasm. Functionally, effector that leads to host programmed cell death. This is RxLR effector protein PITG_10232 from Phytophthora infestans (strain T30-4) (Potato late blight agent).